The following is a 466-amino-acid chain: Purple acid phosphatase 25 (466 aa).

An N-terminal signal peptide occupies residues 1 to 21; sequence MRMNKILLVFVFLSIATVINS. Residue Asp-164 participates in Fe cation binding. Residue Asn-172 is glycosylated (N-linked (GlcNAc...) asparagine). 2 residues coordinate Fe cation: Asp-192 and Tyr-195. Asp-192 serves as a coordination point for Zn(2+). Asn-229 and His-314 together coordinate Zn(2+). Asn-229 is a binding site for substrate. His-324 acts as the Proton donor in catalysis. His-351 serves as a coordination point for Zn(2+). 351-353 serves as a coordination point for substrate; it reads HVH. His-353 serves as a coordination point for Fe cation. N-linked (GlcNAc...) asparagine glycosylation is found at Asn-367 and Asn-424.

This sequence belongs to the metallophosphoesterase superfamily. Purple acid phosphatase family. As to quaternary structure, homodimer. Fe cation serves as cofactor. Requires Zn(2+) as cofactor. In terms of tissue distribution, specifically expressed in flowers.

The protein localises to the secreted. It catalyses the reaction a phosphate monoester + H2O = an alcohol + phosphate. This is Purple acid phosphatase 25 (PAP25) from Arabidopsis thaliana (Mouse-ear cress).